Here is a 186-residue protein sequence, read N- to C-terminus: Ribosome-recycling factor (186 aa).

The protein belongs to the RRF family.

Its subcellular location is the cytoplasm. Its function is as follows. Responsible for the release of ribosomes from messenger RNA at the termination of protein biosynthesis. May increase the efficiency of translation by recycling ribosomes from one round of translation to another. The chain is Ribosome-recycling factor from Leifsonia xyli subsp. xyli (strain CTCB07).